We begin with the raw amino-acid sequence, 133 residues long: Ribulose bisphosphate carboxylase small subunit (133 aa).

This sequence belongs to the RuBisCO small chain family. As to quaternary structure, heterohexadecamer of 8 large and 8 small subunits.

In terms of biological role, ruBisCO catalyzes two reactions: the carboxylation of D-ribulose 1,5-bisphosphate, the primary event in carbon dioxide fixation, as well as the oxidative fragmentation of the pentose substrate. Both reactions occur simultaneously and in competition at the same active site. Although the small subunit is not catalytic it is essential for maximal activity. The polypeptide is Ribulose bisphosphate carboxylase small subunit (Xanthobacter flavus).